The chain runs to 276 residues: MLLRFTKMHGLGNDFMVLDLVSQHAHILPKHAKQWGDRHTGIGFDQLLIVEAPNNPDVDFRYRIFNADGSEVEQCGNGARCFARFVLDKRLTAKRQIRVETKSGIIELDVRSDGQIGVNMGAPRLVPADIPFQAPAQALSYQVDVDGATVELAAVSMGNPHAVLRVADINSAPVHELGPKIEHHPRFPARVNVGFLQVIDRHRAQLRVWERGAGETQACGTGACAAAVAAISQGWMDSPLLIDLPGGRLSIEWAGPGQPVMMTGPAVRVYEGQVRL.

Substrate-binding residues include Asn13, Gln46, and Asn66. The active-site Proton donor is the Cys75. Substrate is bound by residues 76–77 (GN), Asn159, Asn192, and 210–211 (ER). Cys219 functions as the Proton acceptor in the catalytic mechanism. 220 to 221 (GT) lines the substrate pocket.

The protein belongs to the diaminopimelate epimerase family. Homodimer.

The protein localises to the cytoplasm. It carries out the reaction (2S,6S)-2,6-diaminopimelate = meso-2,6-diaminopimelate. Its pathway is amino-acid biosynthesis; L-lysine biosynthesis via DAP pathway; DL-2,6-diaminopimelate from LL-2,6-diaminopimelate: step 1/1. Catalyzes the stereoinversion of LL-2,6-diaminopimelate (L,L-DAP) to meso-diaminopimelate (meso-DAP), a precursor of L-lysine and an essential component of the bacterial peptidoglycan. This chain is Diaminopimelate epimerase, found in Pseudomonas fluorescens.